The primary structure comprises 787 residues: Longitudinals lacking protein, isoforms A/B/D/L (787 aa).

Residues 32-97 form the BTB domain; it reads VDCTLAAEGK…MYRGEVNISQ (66 aa). Disordered regions lie at residues 115–200, 228–340, 506–560, and 653–677; these read LSDN…SSVL, SSGP…ASAS, AKDV…SGGK, and TTGSGQSPSNSGHNNSAGGGSSVLG. Low complexity-rich tracts occupy residues 162-175, 228-251, 263-293, 329-340, 537-560, and 659-668; these read SGDVSGSREGSSSP, SSGPAAGTSSQASSTQQQQPLTST, TSSTAAPASGASASAAVQQAHLHQQQAQTTS, NSATGPNPASAS, HSSSNHSSNGNGSGKPTKTSSGGK, and SPSNSGHNNS. A C2H2-type 1; degenerate zinc finger spans residues 685–707; that stretch reads HPCPVCGRVYKLKSSLRNHQKWE. The C2H2-type 2 zinc finger occupies 714 to 737; the sequence is FQCPFCVYRAKQKMHIGRHMERMH.

As to quaternary structure, isoform D interacts with JIL-1. By stage 11, isoform B is expressed throughout the mesoderm, whereas isoform A, isoform D and isoform L are expressed throughout the ectoderm. Expression becomes restricted during later stages; starting from stage 14 to 16, isoform B is expressed in muscle. Isoform A, isoform D, and at low levels isoform B, are expressed in the CNS. Expression is also seen in specific types of cells in the embryo; isoform A and isoform L are expressed in a dynamic pattern in the ventral neurogenic region starting at stage 7. Isoform L is expressed around the tracheal pits at stage 11.

Its subcellular location is the nucleus. Functionally, putative transcription factor required for axon growth and guidance in the central and peripheral nervous systems. Repels CNS axons away from the midline by promoting the expression of the midline repellent sli and its receptor robo. In Drosophila melanogaster (Fruit fly), this protein is Longitudinals lacking protein, isoforms A/B/D/L.